The primary structure comprises 237 residues: MSQLNVDLQEIAKFEALAAKWWDQHSEFRPLHQINPLRLNWIDERAGGLAGKKVLDVGCGGGILAESMARRGADVLGIDMGEAPLAVGRLHAQQENVQNIEYRQIPVEELAQEQAGQYDVVTCMEMMEHVPDPASIVKACQTLVKPGGHVFFSTINRNPKSYLFAIIGAEYVLRMLPKGTHDYHKFIRPSEMAHDIRNAGLTLKEMTGLHYNPITKRYWLAPNVDVNYMVHTIKTGV.

Residues arginine 38, glycine 58, aspartate 79, and methionine 124 each coordinate S-adenosyl-L-methionine.

This sequence belongs to the methyltransferase superfamily. UbiG/COQ3 family.

The catalysed reaction is a 3-demethylubiquinol + S-adenosyl-L-methionine = a ubiquinol + S-adenosyl-L-homocysteine + H(+). It carries out the reaction a 3-(all-trans-polyprenyl)benzene-1,2-diol + S-adenosyl-L-methionine = a 2-methoxy-6-(all-trans-polyprenyl)phenol + S-adenosyl-L-homocysteine + H(+). It participates in cofactor biosynthesis; ubiquinone biosynthesis. O-methyltransferase that catalyzes the 2 O-methylation steps in the ubiquinone biosynthetic pathway. This Acinetobacter baumannii (strain SDF) protein is Ubiquinone biosynthesis O-methyltransferase.